Reading from the N-terminus, the 350-residue chain is Glycerol-1-phosphate dehydrogenase [NAD(P)+] (350 aa).

Residues 97–101 (GSKID) and 119–122 (TTPS) contribute to the NAD(+) site. Asp-124 serves as a coordination point for substrate. Position 128 (Ser-128) interacts with NAD(+). Asp-171 contributes to the substrate binding site. Asp-171 and His-251 together coordinate Zn(2+). Substrate is bound at residue His-255. Residue His-267 participates in Zn(2+) binding.

It belongs to the glycerol-1-phosphate dehydrogenase family. The cofactor is Zn(2+).

Its subcellular location is the cytoplasm. The catalysed reaction is sn-glycerol 1-phosphate + NAD(+) = dihydroxyacetone phosphate + NADH + H(+). It carries out the reaction sn-glycerol 1-phosphate + NADP(+) = dihydroxyacetone phosphate + NADPH + H(+). It functions in the pathway membrane lipid metabolism; glycerophospholipid metabolism. Functionally, catalyzes the NAD(P)H-dependent reduction of dihydroxyacetonephosphate (DHAP or glycerone phosphate) to glycerol 1-phosphate (G1P). The G1P thus generated is used as the glycerophosphate backbone of phospholipids in the cellular membranes of Archaea. In Picrophilus torridus (strain ATCC 700027 / DSM 9790 / JCM 10055 / NBRC 100828 / KAW 2/3), this protein is Glycerol-1-phosphate dehydrogenase [NAD(P)+].